We begin with the raw amino-acid sequence, 127 residues long: Profilin (127 aa).

The protein belongs to the profilin family. As to quaternary structure, occurs in many kinds of cells as a complex with monomeric actin in a 1:1 ratio.

It localises to the cytoplasm. The protein localises to the cytoskeleton. Its function is as follows. Binds to actin and affects the structure of the cytoskeleton. At high concentrations, profilin prevents the polymerization of actin, whereas it enhances it at low concentrations. By binding to PIP2, it inhibits the formation of IP3 and DG. In S.pombe, it is essential for cytokinesis. In Schizosaccharomyces pombe (strain 972 / ATCC 24843) (Fission yeast), this protein is Profilin (cdc3).